The following is a 215-amino-acid chain: Cytochrome b6 (215 aa).

A helical transmembrane segment spans residues 32-52 (IFHCLGGITLTCFLVQVATGF). A heme c-binding site is contributed by Cys-35. Heme b-binding residues include His-86 and His-100. The next 3 membrane-spanning stretches (helical) occupy residues 90-110 (ASMM…TGGF), 116-136 (LTWV…VTGY), and 186-206 (LHTF…FSMI). His-187 and His-202 together coordinate heme b.

Belongs to the cytochrome b family. PetB subfamily. As to quaternary structure, the 4 large subunits of the cytochrome b6-f complex are cytochrome b6, subunit IV (17 kDa polypeptide, PetD), cytochrome f and the Rieske protein, while the 4 small subunits are PetG, PetL, PetM and PetN. The complex functions as a dimer. Heme b is required as a cofactor. Heme c serves as cofactor.

The protein resides in the plastid. Its subcellular location is the chloroplast thylakoid membrane. Functionally, component of the cytochrome b6-f complex, which mediates electron transfer between photosystem II (PSII) and photosystem I (PSI), cyclic electron flow around PSI, and state transitions. This is Cytochrome b6 from Nymphaea alba (White water-lily).